We begin with the raw amino-acid sequence, 477 residues long: Maternal protein exuperantia-2 (477 aa).

Positions 196 to 209 (KDGNSTKEDEHENP) are enriched in basic and acidic residues. Disordered stretches follow at residues 196–226 (KDGN…NQKQ) and 384–477 (TIKP…FADI). Positions 385–402 (IKPRCKRSGNGTRRRNRA) are enriched in basic residues.

Functionally, ensures the proper localization of the mRNA of the bicoid gene to the anterior regions of the oocyte thus playing a fundamental role in the establishment of the polarity of the oocyte. May bind the bcd mRNA. This Drosophila pseudoobscura pseudoobscura (Fruit fly) protein is Maternal protein exuperantia-2 (exu2).